A 269-amino-acid polypeptide reads, in one-letter code: ParA family protein MG470 (269 aa).

It belongs to the ParA family.

This chain is ParA family protein MG470, found in Mycoplasma genitalium (strain ATCC 33530 / DSM 19775 / NCTC 10195 / G37) (Mycoplasmoides genitalium).